Consider the following 477-residue polypeptide: Bifunctional protein HldE (477 aa).

The segment at 1–318 (MKVNLPAFER…ENAVRGRAAT (318 aa)) is ribokinase. 195-198 (NLSE) is an ATP binding site. Residue D264 is part of the active site. Residues 344–477 (MTNGVFDILH…IKKIQTESEK (134 aa)) form a cytidylyltransferase region.

It in the N-terminal section; belongs to the carbohydrate kinase PfkB family. The protein in the C-terminal section; belongs to the cytidylyltransferase family. As to quaternary structure, homodimer.

It carries out the reaction D-glycero-beta-D-manno-heptose 7-phosphate + ATP = D-glycero-beta-D-manno-heptose 1,7-bisphosphate + ADP + H(+). The catalysed reaction is D-glycero-beta-D-manno-heptose 1-phosphate + ATP + H(+) = ADP-D-glycero-beta-D-manno-heptose + diphosphate. It participates in nucleotide-sugar biosynthesis; ADP-L-glycero-beta-D-manno-heptose biosynthesis; ADP-L-glycero-beta-D-manno-heptose from D-glycero-beta-D-manno-heptose 7-phosphate: step 1/4. It functions in the pathway nucleotide-sugar biosynthesis; ADP-L-glycero-beta-D-manno-heptose biosynthesis; ADP-L-glycero-beta-D-manno-heptose from D-glycero-beta-D-manno-heptose 7-phosphate: step 3/4. In terms of biological role, catalyzes the phosphorylation of D-glycero-D-manno-heptose 7-phosphate at the C-1 position to selectively form D-glycero-beta-D-manno-heptose-1,7-bisphosphate. Functionally, catalyzes the ADP transfer from ATP to D-glycero-beta-D-manno-heptose 1-phosphate, yielding ADP-D-glycero-beta-D-manno-heptose. This chain is Bifunctional protein HldE, found in Salmonella arizonae (strain ATCC BAA-731 / CDC346-86 / RSK2980).